The chain runs to 393 residues: Probable hydrolase sll0100 (393 aa).

This sequence belongs to the peptidase M20 family.

The sequence is that of Probable hydrolase sll0100 from Synechocystis sp. (strain ATCC 27184 / PCC 6803 / Kazusa).